We begin with the raw amino-acid sequence, 209 residues long: Thiamine-phosphate synthase (209 aa).

4-amino-2-methyl-5-(diphosphooxymethyl)pyrimidine is bound by residues 35-39 (QYRDK) and asparagine 67. Residues aspartate 68 and aspartate 86 each contribute to the Mg(2+) site. Position 105 (threonine 105) interacts with 4-amino-2-methyl-5-(diphosphooxymethyl)pyrimidine. 2-[(2R,5Z)-2-carboxy-4-methylthiazol-5(2H)-ylidene]ethyl phosphate is bound at residue 132 to 134 (SNT). Lysine 135 provides a ligand contact to 4-amino-2-methyl-5-(diphosphooxymethyl)pyrimidine. Glycine 162 contacts 2-[(2R,5Z)-2-carboxy-4-methylthiazol-5(2H)-ylidene]ethyl phosphate.

The protein belongs to the thiamine-phosphate synthase family. Mg(2+) is required as a cofactor.

The catalysed reaction is 2-[(2R,5Z)-2-carboxy-4-methylthiazol-5(2H)-ylidene]ethyl phosphate + 4-amino-2-methyl-5-(diphosphooxymethyl)pyrimidine + 2 H(+) = thiamine phosphate + CO2 + diphosphate. It catalyses the reaction 2-(2-carboxy-4-methylthiazol-5-yl)ethyl phosphate + 4-amino-2-methyl-5-(diphosphooxymethyl)pyrimidine + 2 H(+) = thiamine phosphate + CO2 + diphosphate. The enzyme catalyses 4-methyl-5-(2-phosphooxyethyl)-thiazole + 4-amino-2-methyl-5-(diphosphooxymethyl)pyrimidine + H(+) = thiamine phosphate + diphosphate. The protein operates within cofactor biosynthesis; thiamine diphosphate biosynthesis; thiamine phosphate from 4-amino-2-methyl-5-diphosphomethylpyrimidine and 4-methyl-5-(2-phosphoethyl)-thiazole: step 1/1. Condenses 4-methyl-5-(beta-hydroxyethyl)thiazole monophosphate (THZ-P) and 2-methyl-4-amino-5-hydroxymethyl pyrimidine pyrophosphate (HMP-PP) to form thiamine monophosphate (TMP). This chain is Thiamine-phosphate synthase, found in Pseudomonas fluorescens (strain SBW25).